The following is a 188-amino-acid chain: Antitoxin SocA (188 aa).

In terms of assembly, interacts with cognate toxin SocB and with ClpX.

Functionally, antitoxin component of an atypical type II toxin-antitoxin (TA) system. Unlike most type II TA systems, neutralizes the toxic activity of cognate toxin SocB by acting as an adapter to promote its degradation by ClpXP; degradation is dependent on the N-terminus of ClpX. The chain is Antitoxin SocA from Caulobacter vibrioides (strain NA1000 / CB15N) (Caulobacter crescentus).